The following is a 1495-amino-acid chain: Chromosome partition protein MukB (1495 aa).

Residue 60 to 67 coordinates ATP; that stretch reads GGNGAGKS. Coiled-coil stretches lie at residues 322–693, 861–1140, and 1233–1289; these read RART…SQPD, EDVM…AKVS, and IDAI…LQNI. Residues 692–809 form a flexible hinge region; sequence PDGSEDARLN…EIPLFGRAAR (118 aa).

The protein belongs to the SMC family. MukB subfamily. As to quaternary structure, homodimerization via its hinge domain. Binds to DNA via its C-terminal region. Interacts, and probably forms a ternary complex, with MukE and MukF via its C-terminal region. The complex formation is stimulated by calcium or magnesium. Interacts with tubulin-related protein FtsZ.

It is found in the cytoplasm. The protein localises to the nucleoid. In terms of biological role, plays a central role in chromosome condensation, segregation and cell cycle progression. Functions as a homodimer, which is essential for chromosome partition. Involved in negative DNA supercoiling in vivo, and by this means organize and compact chromosomes. May achieve or facilitate chromosome segregation by condensation DNA from both sides of a centrally located replisome during cell division. This chain is Chromosome partition protein MukB, found in Pasteurella multocida (strain Pm70).